A 75-amino-acid chain; its full sequence is U6-lycotoxin-Ls1h (75 aa).

An N-terminal signal peptide occupies residues methionine 1–alanine 21. The propeptide occupies glutamate 22–arginine 25.

Belongs to the neurotoxin 19 (CSTX) family. 06 (U6-Lctx) subfamily. Post-translationally, contains 4 disulfide bonds. Expressed by the venom gland.

The protein localises to the secreted. This chain is U6-lycotoxin-Ls1h, found in Lycosa singoriensis (Wolf spider).